A 32-amino-acid chain; its full sequence is 24 kDa flagellin (32 aa).

It belongs to the archaeal flagellin family. Post-translationally, glycosylated.

The protein resides in the archaeal flagellum. Functionally, flagellin is the subunit protein which polymerizes to form the filaments of archaeal flagella. The sequence is that of 24 kDa flagellin from Methanospirillum hungatei.